The sequence spans 189 residues: MAIKLIVGLRNPGSAYEQTRHNAGAWLVTALAQRHNSHFKIDKKMQAELTEIDINNHPCRLVLPLSFMNHSGQTTRIISQFYKIEPGEILIVHDELDLPVGRIKLKTGGGHGGHNGLRDITAQLGTGVFHRLRIGIGHPGHKDLVHQYVLSRPSMHDRQQIYDAIDRGIAIIPIVLSGDMARAMNQVNA.

Tyrosine 16 contacts tRNA. Histidine 21 serves as the catalytic Proton acceptor. TRNA contacts are provided by phenylalanine 67, asparagine 69, and asparagine 115.

Belongs to the PTH family. As to quaternary structure, monomer.

The protein localises to the cytoplasm. The catalysed reaction is an N-acyl-L-alpha-aminoacyl-tRNA + H2O = an N-acyl-L-amino acid + a tRNA + H(+). Hydrolyzes ribosome-free peptidyl-tRNAs (with 1 or more amino acids incorporated), which drop off the ribosome during protein synthesis, or as a result of ribosome stalling. Its function is as follows. Catalyzes the release of premature peptidyl moieties from peptidyl-tRNA molecules trapped in stalled 50S ribosomal subunits, and thus maintains levels of free tRNAs and 50S ribosomes. This is Peptidyl-tRNA hydrolase from Legionella pneumophila (strain Corby).